The chain runs to 2395 residues: Centrosomal protein of 295 kDa (2395 aa).

Residues 1 to 540 (MKRKVMNGKL…KQADHLEVRP (540 aa)) form a necessary for centriole targeting and microtubule association region. Ser13 bears the Phosphoserine mark. 5 coiled-coil regions span residues 53 to 84 (QRRN…LEKL), 114 to 148 (AERK…HIKA), 209 to 277 (DAHL…KRQT), 488 to 538 (ARHK…HLEV), and 567 to 592 (QQNR…VLKE). Disordered stretches follow at residues 602-643 (LIPD…PVQP), 660-681 (GHIP…SQER), and 735-764 (SDSQ…LMPE). Ser634 bears the Phosphoserine mark. A compositionally biased stretch (low complexity) spans 735 to 750 (SDSQQISSEDSENISS). The stretch at 817–848 (GQLELQKKVLQERQEAQEKLLSCTQKELEEQT) forms a coiled coil. 3 disordered regions span residues 864–893 (SLPS…SMDN), 966–986 (ADTQ…KGLL), and 1212–1272 (VDPE…SKVT). Residues 1219–1250 (FQFSPQTQENRSSQQTGFSSFTPSLRQPSCVS) are compositionally biased toward polar residues. Positions 1444-1488 (HDDLQALQQQLDVHREAIRSCQDIQEELLLQRLNKLEQRVSSKQI) form a coiled coil. Phosphoserine is present on Ser1565. A compositionally biased stretch (low complexity) spans 1677 to 1692 (PWGDSSQGSSSGDQPG). 5 disordered regions span residues 1677-1715 (PWGD…RASK), 1819-1845 (SEEE…ETQE), 1875-1899 (ESFS…GSLS), 1989-2013 (DLSS…SSEK), and 2354-2395 (NKTP…SQCI). Over residues 1697-1710 (HAEHSGESLGKELS) the composition is skewed to basic and acidic residues. Residues 1880-1894 (QTEHQEQESSSKEEE) are compositionally biased toward basic and acidic residues. The ALMS motif stretch occupies residues 2329–2395 (SLGEAFMKRK…TAKRNRSQCI (67 aa)). The span at 2376-2388 (HLKEAVSGDETAK) shows a compositional bias: basic and acidic residues.

As to quaternary structure, interacts (via ALMS motif) with microtubules; this interaction is direct.

It is found in the cytoplasm. It localises to the cytoskeleton. The protein resides in the microtubule organizing center. Its subcellular location is the centrosome. The protein localises to the centriole. It is found in the spindle. In terms of biological role, centriole-enriched microtubule-binding protein involved in centriole biogenesis. Essential for the generation of the distal portion of new-born centrioles in a CPAP- and CEP120-mediated elongation dependent manner during the cell cycle S/G2 phase after formation of the initiating cartwheel structure. Required for the recruitment of centriolar proteins, such as POC1B, POC5 and CEP135, into the distal portion of centrioles. Also required for centriole-to-centrosome conversion during mitotic progression, but is dispensable for cartwheel removal or centriole disengagement. Binds to and stabilizes centriolar microtubule. May be involved in ciliogenesis. The polypeptide is Centrosomal protein of 295 kDa (Rattus norvegicus (Rat)).